The sequence spans 35 residues: Cytochrome b6-f complex subunit 5 (35 aa).

A helical transmembrane segment spans residues 5 to 25 (LLTGIVLGSIFITLLGLLAAA).

Belongs to the PetG family. In terms of assembly, the 4 large subunits of the cytochrome b6-f complex are cytochrome b6, subunit IV (17 kDa polypeptide, PetD), cytochrome f and the Rieske protein, while the 4 small subunits are PetG, PetL, PetM and PetN. The complex functions as a dimer.

The protein resides in the plastid. It localises to the chloroplast thylakoid membrane. Component of the cytochrome b6-f complex, which mediates electron transfer between photosystem II (PSII) and photosystem I (PSI), cyclic electron flow around PSI, and state transitions. PetG is required for either the stability or assembly of the cytochrome b6-f complex. The protein is Cytochrome b6-f complex subunit 5 of Cyanidium caldarium (Red alga).